We begin with the raw amino-acid sequence, 1256 residues long: N-acetylglucosamine-1-phosphotransferase subunits alpha/beta (1256 aa).

The helical transmembrane segment at 22–42 threads the bilayer; sequence VCFLGVVVTIVSAFQFGEVVL. Residues asparagine 83, asparagine 114, asparagine 148, asparagine 179, and asparagine 250 are each glycosylated (N-linked (GlcNAc...) asparagine). Intrachain disulfides connect cysteine 438/cysteine 461, cysteine 452/cysteine 468, cysteine 505/cysteine 528, and cysteine 519/cysteine 535. 2 LNR repeats span residues 438–473 and 505–545; these read CAEG…GNSG and CNQG…ELYK. The Ca(2+) site is built by aspartate 449, aspartate 464, aspartate 467, aspartate 516, aspartate 531, and aspartate 534. Residues asparagine 614, asparagine 699, asparagine 729, asparagine 829, and asparagine 1009 are each glycosylated (N-linked (GlcNAc...) asparagine). The 100-residue stretch at 699–798 folds into the DMAP1-binding domain; sequence NISLLPKDAQ…TFPAVSVKVN (100 aa). The 36-residue stretch at 1005–1040 folds into the EF-hand domain; the sequence is VQPLNISQVFDEVDTDQSGVLSDREIRTLATRIHEL. Residues aspartate 1018, aspartate 1020, serine 1022, and glutamate 1029 each coordinate Ca(2+). A glycan (N-linked (GlcNAc...) asparagine) is linked at asparagine 1129. The helical transmembrane segment at 1215 to 1235 threads the bilayer; sequence VLATLIMFTIFSFFAEQLIAL.

This sequence belongs to the stealth family. Hexamer of two alpha, two beta and two gamma (GNPTG) subunits; disulfide-linked. The alpha and/or the beta subunits of the enzyme constitute the catalytic subunits. Interacts with LYSET; facilitates proper localization of GNPTAB. Post-translationally, the alpha- and beta-subunits are generated by a proteolytic cleavage by MBTPS1 protease at the Lys-928-Asp-929 bond. As to expression, expressed in the heart, whole brain, placenta, lung, liver, skeletal muscle, kidney and pancreas.

It localises to the golgi apparatus membrane. It carries out the reaction N(4)-[alpha-D-mannosyl-(1-&gt;2)-alpha-D-mannosyl-(glycan)]-L-asparaginyl-[protein] + UDP-N-acetyl-alpha-D-glucosamine = N(4)-[6-(N-acetyl-alpha-D-glucosaminyl-1-phospho)-alpha-D-mannosyl-(1-&gt;2)-alpha-D-mannosyl-(glycan)]-L-asparaginyl-[protein] + UMP + H(+). Its function is as follows. Catalyzes the formation of mannose 6-phosphate (M6P) markers on high mannose type oligosaccharides in the Golgi apparatus. M6P residues are required to bind to the M6P receptors (MPR), which mediate the vesicular transport of lysosomal enzymes to the endosomal/prelysosomal compartment. In Homo sapiens (Human), this protein is N-acetylglucosamine-1-phosphotransferase subunits alpha/beta (GNPTAB).